A 92-amino-acid polypeptide reads, in one-letter code: Protein LSO2 (92 aa).

2 stretches are compositionally biased toward basic and acidic residues: residues 1–10 and 38–72; these read MGKRFSESAA and EASK…ERDA. A disordered region spans residues 1–92; that stretch reads MGKRFSESAA…KGGKGKRKMK (92 aa). A coiled-coil region spans residues 17–80; sequence ARKRDQAHAK…DALLTAEEEQ (64 aa).

It belongs to the CCDC124 family. As to quaternary structure, associates with translationally inactive ribosomes in the nonrotated state. LSO2 bridges the decoding sites of the small with the GTPase activating center (GAC) of the large subunit. This position allows accommodation of the DOM34-dependent ribosome recycling system, which splits LSO2-containing ribosomes.

The protein resides in the nucleus. It localises to the cytoplasm. In terms of biological role, ribosome-binding protein involved in ribosome hibernation by associating with translationally inactive ribosomes. Required for translational recovery after starvation from stationary phase. May facilitate rapid translation reactivation by stabilizing the recycling-competent state of inactive ribosomes. The polypeptide is Protein LSO2 (Saccharomyces cerevisiae (strain ATCC 204508 / S288c) (Baker's yeast)).